The chain runs to 364 residues: UDP-N-acetylglucosamine--N-acetylmuramyl-(pentapeptide) pyrophosphoryl-undecaprenol N-acetylglucosamine transferase (364 aa).

UDP-N-acetyl-alpha-D-glucosamine-binding positions include 12–14, N124, R167, S195, I249, 268–273, and Q294; these read TGG and ALTVSE.

It belongs to the glycosyltransferase 28 family. MurG subfamily.

It is found in the cell inner membrane. It carries out the reaction di-trans,octa-cis-undecaprenyl diphospho-N-acetyl-alpha-D-muramoyl-L-alanyl-D-glutamyl-meso-2,6-diaminopimeloyl-D-alanyl-D-alanine + UDP-N-acetyl-alpha-D-glucosamine = di-trans,octa-cis-undecaprenyl diphospho-[N-acetyl-alpha-D-glucosaminyl-(1-&gt;4)]-N-acetyl-alpha-D-muramoyl-L-alanyl-D-glutamyl-meso-2,6-diaminopimeloyl-D-alanyl-D-alanine + UDP + H(+). It functions in the pathway cell wall biogenesis; peptidoglycan biosynthesis. Its function is as follows. Cell wall formation. Catalyzes the transfer of a GlcNAc subunit on undecaprenyl-pyrophosphoryl-MurNAc-pentapeptide (lipid intermediate I) to form undecaprenyl-pyrophosphoryl-MurNAc-(pentapeptide)GlcNAc (lipid intermediate II). The polypeptide is UDP-N-acetylglucosamine--N-acetylmuramyl-(pentapeptide) pyrophosphoryl-undecaprenol N-acetylglucosamine transferase (Alteromonas mediterranea (strain DSM 17117 / CIP 110805 / LMG 28347 / Deep ecotype)).